The sequence spans 365 residues: tRNA(Met) cytidine acetate ligase (365 aa).

Residues 7–20 (IAEF…HKYL), Gly96, Asn152, and Arg175 each bind ATP.

The protein belongs to the TmcAL family.

Its subcellular location is the cytoplasm. The enzyme catalyses cytidine(34) in elongator tRNA(Met) + acetate + ATP = N(4)-acetylcytidine(34) in elongator tRNA(Met) + AMP + diphosphate. In terms of biological role, catalyzes the formation of N(4)-acetylcytidine (ac(4)C) at the wobble position of elongator tRNA(Met), using acetate and ATP as substrates. First activates an acetate ion to form acetyladenylate (Ac-AMP) and then transfers the acetyl group to tRNA to form ac(4)C34. The polypeptide is tRNA(Met) cytidine acetate ligase (Streptococcus pneumoniae (strain Taiwan19F-14)).